The sequence spans 66 residues: MANGKDVRIRVILECTSCVRKSVNKKSIGISRYITQKNRHNRPSRLELRKFCPYCYKHTIHGEIKK.

This sequence belongs to the bacterial ribosomal protein bL33 family.

Its subcellular location is the plastid. It localises to the chloroplast. The polypeptide is Large ribosomal subunit protein bL33c (Populus alba (White poplar)).